The primary structure comprises 412 residues: Tryptophan synthase beta chain 1 (412 aa).

Lysine 103 is subject to N6-(pyridoxal phosphate)lysine.

It belongs to the TrpB family. As to quaternary structure, tetramer of two alpha and two beta chains. Pyridoxal 5'-phosphate is required as a cofactor.

The catalysed reaction is (1S,2R)-1-C-(indol-3-yl)glycerol 3-phosphate + L-serine = D-glyceraldehyde 3-phosphate + L-tryptophan + H2O. It participates in amino-acid biosynthesis; L-tryptophan biosynthesis; L-tryptophan from chorismate: step 5/5. Functionally, the beta subunit is responsible for the synthesis of L-tryptophan from indole and L-serine. The sequence is that of Tryptophan synthase beta chain 1 (trpB1) from Chlamydia caviae (strain ATCC VR-813 / DSM 19441 / 03DC25 / GPIC) (Chlamydophila caviae).